Reading from the N-terminus, the 61-residue chain is Small ribosomal subunit protein uS14 (61 aa).

Cys-24, Cys-27, Cys-40, and Cys-43 together coordinate Zn(2+).

It belongs to the universal ribosomal protein uS14 family. Zinc-binding uS14 subfamily. In terms of assembly, part of the 30S ribosomal subunit. Contacts proteins S3 and S10. Requires Zn(2+) as cofactor.

Functionally, binds 16S rRNA, required for the assembly of 30S particles and may also be responsible for determining the conformation of the 16S rRNA at the A site. The protein is Small ribosomal subunit protein uS14 of Desulfitobacterium hafniense (strain Y51).